A 382-amino-acid chain; its full sequence is Mannitol-1-phosphate 5-dehydrogenase (382 aa).

Position 3 to 14 (3 to 14) interacts with NAD(+); it reads ALHFGAGNIGRG.

The protein belongs to the mannitol dehydrogenase family.

It carries out the reaction D-mannitol 1-phosphate + NAD(+) = beta-D-fructose 6-phosphate + NADH + H(+). The chain is Mannitol-1-phosphate 5-dehydrogenase from Salmonella agona (strain SL483).